Here is a 119-residue protein sequence, read N- to C-terminus: Holo-[acyl-carrier-protein] synthase (119 aa).

Residues D8 and E58 each coordinate Mg(2+).

It belongs to the P-Pant transferase superfamily. AcpS family. The cofactor is Mg(2+).

It is found in the cytoplasm. The enzyme catalyses apo-[ACP] + CoA = holo-[ACP] + adenosine 3',5'-bisphosphate + H(+). In terms of biological role, transfers the 4'-phosphopantetheine moiety from coenzyme A to a Ser of acyl-carrier-protein. This is Holo-[acyl-carrier-protein] synthase from Bacillus cereus (strain B4264).